The chain runs to 1401 residues: DNA polymerase III PolC-type (1401 aa).

The region spanning 388–543 (FVVFDIETTG…EDAKATAEIF (156 aa)) is the Exonuclease domain.

Belongs to the DNA polymerase type-C family. PolC subfamily.

Its subcellular location is the cytoplasm. It carries out the reaction DNA(n) + a 2'-deoxyribonucleoside 5'-triphosphate = DNA(n+1) + diphosphate. Required for replicative DNA synthesis. This DNA polymerase also exhibits 3' to 5' exonuclease activity. In Caldanaerobacter subterraneus subsp. tengcongensis (strain DSM 15242 / JCM 11007 / NBRC 100824 / MB4) (Thermoanaerobacter tengcongensis), this protein is DNA polymerase III PolC-type.